The sequence spans 514 residues: 2-isopropylmalate synthase (514 aa).

Residues 5–268 (LIIFDTTLRD…DVGLDTTQIV (264 aa)) enclose the Pyruvate carboxyltransferase domain. 4 residues coordinate Mn(2+): D14, H202, H204, and N239. The tract at residues 395–514 (KFVSLSQRSE…KDDKLNPQRS (120 aa)) is regulatory domain.

The protein belongs to the alpha-IPM synthase/homocitrate synthase family. LeuA type 1 subfamily. As to quaternary structure, homodimer. Mn(2+) serves as cofactor.

Its subcellular location is the cytoplasm. It catalyses the reaction 3-methyl-2-oxobutanoate + acetyl-CoA + H2O = (2S)-2-isopropylmalate + CoA + H(+). It participates in amino-acid biosynthesis; L-leucine biosynthesis; L-leucine from 3-methyl-2-oxobutanoate: step 1/4. Functionally, catalyzes the condensation of the acetyl group of acetyl-CoA with 3-methyl-2-oxobutanoate (2-ketoisovalerate) to form 3-carboxy-3-hydroxy-4-methylpentanoate (2-isopropylmalate). The polypeptide is 2-isopropylmalate synthase (Burkholderia ambifaria (strain ATCC BAA-244 / DSM 16087 / CCUG 44356 / LMG 19182 / AMMD) (Burkholderia cepacia (strain AMMD))).